Reading from the N-terminus, the 337-residue chain is HTH-type transcriptional repressor PurR (337 aa).

One can recognise an HTH lacI-type domain in the interval 2–56 (ATIKDVAKLAAVSTTTVSHVINKTRFVAEATQKRVWEAVEELNYAPSAVARSLKC). A DNA-binding region (H-T-H motif) is located at residues 4 to 23 (IKDVAKLAAVSTTTVSHVIN). Residues 48–56 (SAVARSLKC) mediate DNA binding. The hypoxanthine site is built by Phe73, Lys189, Thr191, Phe220, and Asp276.

In terms of assembly, homodimer.

The protein operates within purine metabolism; purine nucleotide biosynthesis [regulation]. Is the main repressor of the genes involved in the de novo synthesis of purine nucleotides, regulating purB, purC, purEK, purF, purHD, purL, purMN and guaBA expression. PurR is allosterically activated to bind its cognate DNA by binding the purine corepressors, hypoxanthine or guanine, thereby effecting transcription repression. The protein is HTH-type transcriptional repressor PurR of Aliivibrio fischeri (strain MJ11) (Vibrio fischeri).